The chain runs to 601 residues: Leucine zipper putative tumor suppressor 1 (601 aa).

Glycine 2 carries N-myristoyl glycine lipidation. Residues 135-190 (GAILHSSPESTNHQLHPMPPDKPKEQELKPGLCSGALSDSGRNSMSSLPTHSTTSS) form a disordered region. The segment covering 153–162 (PPDKPKEQEL) has biased composition (basic and acidic residues). The span at 174–190 (SGRNSMSSLPTHSTTSS) shows a compositional bias: polar residues. The stretch at 255-573 (PLSTDECTIQ…RLEKALQQLA (319 aa)) forms a coiled coil.

Belongs to the LZTS family. In terms of assembly, binds EEF1G, TLK2 and CDK1. Phosphorylated on serine residues. Hyperphosphorylated by the cAMP-dependent kinase PKA during cell-cycle progression. In terms of tissue distribution, highly expressed in brain, in particular in cortex, the CA2 region of the hippocampus, olfactory bulb, striatum and pons. Not detectable in the other tissues tested.

Its subcellular location is the cytoplasm. It localises to the cell membrane. The protein resides in the cell projection. The protein localises to the dendritic spine. It is found in the postsynaptic density. Its subcellular location is the synapse. Involved in the regulation of cell growth. May stabilize the active CDC2-cyclin B1 complex and thereby contribute to the regulation of the cell cycle and the prevention of uncontrolled cell proliferation. May act as tumor suppressor. The polypeptide is Leucine zipper putative tumor suppressor 1 (Lzts1) (Rattus norvegicus (Rat)).